We begin with the raw amino-acid sequence, 172 residues long: B-box zinc finger protein 18 (172 aa).

Zn(2+) is bound by residues Cys5, Cys8, Cys28, His33, Cys56, Cys59, Cys79, and His84. The B box-type 1; atypical zinc-finger motif lies at 5 to 47 (CDACESAAAIVFCAADEAALCCSCDEKVHKCNKLASRHLRVGL). The segment at 56–96 (CDICENAPAFFYCEIDGSSLCLQCDMVVHVGGKRTHRRFLL) adopts a B box-type 2; atypical zinc-finger fold. The tract at residues 119–172 (QKASSGRGQESNGNGDHDHNMIDLNSNPQRVHEPGSHNQEEGIDVNNANNHEHE) is disordered. Positions 120-132 (KASSGRGQESNGN) are enriched in polar residues. Basic and acidic residues predominate over residues 148 to 158 (RVHEPGSHNQE).

As to expression, expressed in vasculature of leaves and petioles.

The protein resides in the nucleus. Acts as a negative regulator of seedling photomorphogenesis. Acts as a negative regulator of blue light-mediated inhibition of hypocotyl elongation through increase of bioactive gibberellin levels. Acts as a repressor of thermotolerance by modulating expression of a set of heat shock-responsive genes. The protein is B-box zinc finger protein 18 of Arabidopsis thaliana (Mouse-ear cress).